We begin with the raw amino-acid sequence, 461 residues long: Adenine DNA glycosylase (461 aa).

Residue glutamate 69 is the Proton donor/acceptor of the active site. [4Fe-4S] cluster contacts are provided by cysteine 226, cysteine 233, cysteine 236, and cysteine 242. The region spanning 296 to 437 (QREERALVVI…RAALEIKKRK (142 aa)) is the Nudix hydrolase domain. A Nudix box motif is present at residues 340 to 366 (FGQESWPKDMDAEFQKSIAQWISNDSR).

Belongs to the Nth/MutY family. Monomer. The cofactor is [4Fe-4S] cluster.

The enzyme catalyses Hydrolyzes free adenine bases from 7,8-dihydro-8-oxoguanine:adenine mismatched double-stranded DNA, leaving an apurinic site.. In terms of biological role, adenine glycosylase active on G-A mispairs. Has glycosylase and nicking activities and is active at A/G and A/GO sites. This Schizosaccharomyces pombe (strain 972 / ATCC 24843) (Fission yeast) protein is Adenine DNA glycosylase (myh1).